Reading from the N-terminus, the 631-residue chain is Mitochondrial Rho GTPase (631 aa).

The Cytoplasmic segment spans residues 1–605 (MRAGRVRPLR…TQADLKSSTF (605 aa)). Residues 15-181 (KKDVRILLVG…FYYAQKAVLH (167 aa)) form the Miro 1 domain. GTP is bound by residues Arg-27, Gly-29, Lys-30, Thr-31, and Ser-32. Residue Thr-31 participates in Mg(2+) binding. Residue Asp-70 participates in Mg(2+) binding. Ser-72 serves as a coordination point for GTP. Lys-105 is modified (N6-acetyllysine). GTP contacts are provided by Asn-131, Lys-132, Asp-134, Ala-162, and Lys-163. Lys-166 participates in a covalent cross-link: Glycyl lysine isopeptide (Lys-Gly) (interchain with G-Cter in ubiquitin). Residues 197–232 (ACIKALTRIFKISDQDNDGTLNDAELNFFQRICFNT) form the EF-hand 1 domain. Ca(2+) contacts are provided by Asp-210, Asp-212, Asp-214, Thr-216, and Glu-221. Lys-248 participates in a covalent cross-link: Glycyl lysine isopeptide (Lys-Gly) (interchain with G-Cter in ubiquitin). The 36-residue stretch at 317-352 (HAYLFLQSTFDKHDLDRDCALSPDELKDLFQVFPYI) folds into the EF-hand 2 domain. 5 residues coordinate Ca(2+): Asp-330, Asp-332, Asp-334, Ala-336, and Glu-341. The Miro 2 domain occupies 429–592 (RNVFRCNVIG…FVKLTTMAMY (164 aa)). Residues Gly-441, Cys-442, Gly-443, Lys-444, Thr-445, Gly-446, Lys-460, Lys-541, Asp-543, Thr-571, and Cys-572 each contribute to the GTP site. Gly-441 is a Mg(2+) binding site. Lys-585 participates in a covalent cross-link: Glycyl lysine isopeptide (Lys-Gly) (interchain with G-Cter in ubiquitin). A helical; Anchor for type IV membrane protein membrane pass occupies residues 606 to 628 (WLRASFGATVFAVVGFAMYRALL). The Mitochondrial intermembrane portion of the chain corresponds to 629–631 (KQR).

The protein belongs to the mitochondrial Rho GTPase family. Homodimer. Interacts with the kinesin-binding proteins TRAK1/OIP106 and TRAK2/GRIF1, forming a link between mitochondria and the trafficking apparatus of the microtubules. Interacts with RAP1GDS1. Interacts with ARMCX1. Found in a complex with KIF5B, OGT, RHOT2 and TRAK1. In terms of processing, ubiquitinated by PRKN during mitophagy, leading to its degradation and enhancement of mitophagy. Deubiquitinated by USP30. Acetylation on Lys-105 decreases sensitivity of mitochondrial transport to elevated Ca(2+) levels, increases mitochondrial transport and promotes axon growth. Deacetylated by HDAC6 which blocks mitochondrial transport and mediates axon growth inhibition.

Its subcellular location is the mitochondrion outer membrane. The catalysed reaction is GTP + H2O = GDP + phosphate + H(+). It carries out the reaction ATP + H2O = ADP + phosphate + H(+). It catalyses the reaction UTP + H2O = UDP + phosphate + H(+). Its function is as follows. Atypical mitochondrial nucleoside-triphosphatase (NTPase) involved in mitochondrial trafficking. Probably involved in control of anterograde transport of mitochondria and their subcellular distribution. Promotes mitochondrial fission during high calcium conditions. Can hydrolyze GTP, ATP and UTP. In Rattus norvegicus (Rat), this protein is Mitochondrial Rho GTPase.